The chain runs to 226 residues: V-type proton ATPase subunit E (226 aa).

The protein belongs to the V-ATPase E subunit family. V-ATPase is a heteromultimeric enzyme made up of two complexes: the ATP-hydrolytic V1 complex and the proton translocation V0 complex. The V1 complex consists of three catalytic AB heterodimers that form a heterohexamer, three peripheral stalks each consisting of EG heterodimers, one central rotor including subunits D and F, and the regulatory subunits C and H. The proton translocation complex V0 consists of the proton transport subunit a, a ring of proteolipid subunits c9c'', rotary subunit d, subunits e and f, and the accessory subunits VhaAC45 and ATP6AP2.

Subunit of the V1 complex of vacuolar(H+)-ATPase (V-ATPase), a multisubunit enzyme composed of a peripheral complex (V1) that hydrolyzes ATP and a membrane integral complex (V0) that translocates protons. V-ATPase is responsible for acidifying and maintaining the pH of intracellular compartments and in some cell types, is targeted to the plasma membrane, where it is responsible for acidifying the extracellular environment. This is V-type proton ATPase subunit E (Vha26) from Drosophila melanogaster (Fruit fly).